A 437-amino-acid polypeptide reads, in one-letter code: 3-phosphoshikimate 1-carboxyvinyltransferase (437 aa).

3-phosphoshikimate contacts are provided by lysine 24, serine 25, and arginine 29. Lysine 24 serves as a coordination point for phosphoenolpyruvate. Glycine 95 and arginine 123 together coordinate phosphoenolpyruvate. 4 residues coordinate 3-phosphoshikimate: serine 168, glutamine 170, aspartate 317, and lysine 344. Glutamine 170 contacts phosphoenolpyruvate. Aspartate 317 functions as the Proton acceptor in the catalytic mechanism. Phosphoenolpyruvate contacts are provided by arginine 348 and arginine 390.

It belongs to the EPSP synthase family. As to quaternary structure, monomer.

It localises to the cytoplasm. The enzyme catalyses 3-phosphoshikimate + phosphoenolpyruvate = 5-O-(1-carboxyvinyl)-3-phosphoshikimate + phosphate. It participates in metabolic intermediate biosynthesis; chorismate biosynthesis; chorismate from D-erythrose 4-phosphate and phosphoenolpyruvate: step 6/7. Its function is as follows. Catalyzes the transfer of the enolpyruvyl moiety of phosphoenolpyruvate (PEP) to the 5-hydroxyl of shikimate-3-phosphate (S3P) to produce enolpyruvyl shikimate-3-phosphate and inorganic phosphate. The polypeptide is 3-phosphoshikimate 1-carboxyvinyltransferase (Wolinella succinogenes (strain ATCC 29543 / DSM 1740 / CCUG 13145 / JCM 31913 / LMG 7466 / NCTC 11488 / FDC 602W) (Vibrio succinogenes)).